A 292-amino-acid chain; its full sequence is ATP synthase gamma chain (292 aa).

The protein belongs to the ATPase gamma chain family. In terms of assembly, F-type ATPases have 2 components, CF(1) - the catalytic core - and CF(0) - the membrane proton channel. CF(1) has five subunits: alpha(3), beta(3), gamma(1), delta(1), epsilon(1). CF(0) has three main subunits: a, b and c.

It is found in the cell inner membrane. Its function is as follows. Produces ATP from ADP in the presence of a proton gradient across the membrane. The gamma chain is believed to be important in regulating ATPase activity and the flow of protons through the CF(0) complex. This is ATP synthase gamma chain from Bradyrhizobium sp. (strain ORS 278).